The following is a 31-amino-acid chain: Circulin-B (31 aa).

A cross-link (cyclopeptide (Gly-Asn)) is located at residues 1 to 31; it reads GVIPCGESCVFIPCISTLLGCSCKNKVCYRN. Cystine bridges form between C5/C21, C9/C23, and C14/C28.

In terms of processing, this is a cyclic peptide.

In terms of biological role, probably participates in a plant defense mechanism. Has antibiotic activity. Inhibits the cytopathic effects and replication of the human immunodeficiency virus. Active against both Gram-positive and Gram-negative bacteria. This Chassalia parviflora protein is Circulin-B.